A 240-amino-acid chain; its full sequence is (DL)-glycerol-3-phosphatase 2 (240 aa).

The active-site Nucleophile is Asp20. Positions 20, 22, and 185 each coordinate Mg(2+). Asp22 serves as the catalytic Proton donor.

It belongs to the HAD-like hydrolase superfamily. DOG/GPP family. Requires Mg(2+) as cofactor. In terms of tissue distribution, ubiquitous with highest expression in siliques. Mainly restricted to the meristem of immature flower and vascular elements of the root, shoot, leave, siliqua and developing embryo (at the protein level).

Its subcellular location is the cytoplasm. The catalysed reaction is sn-glycerol 1-phosphate + H2O = glycerol + phosphate. The enzyme catalyses sn-glycerol 3-phosphate + H2O = glycerol + phosphate. Functionally, acts as a glycerol-3-phosphatase with higher stereospecificity for L-glycerol-3-phosphate than DL-glycerol-3-phosphate. In Arabidopsis thaliana (Mouse-ear cress), this protein is (DL)-glycerol-3-phosphatase 2 (GPP2).